The primary structure comprises 68 residues: MKTITLNIKGIHCGCCVKNLTQVLTELDGVQSADVQLEGKANITFDENRVNVAQLIEVIEDAGFDATE.

The HMA domain maps to 2–67 (KTITLNIKGI…VIEDAGFDAT (66 aa)). Cys13 and Cys16 together coordinate a metal cation.

This is an uncharacterized protein from Haemophilus influenzae (strain ATCC 51907 / DSM 11121 / KW20 / Rd).